Reading from the N-terminus, the 494-residue chain is Probable cytosol aminopeptidase (494 aa).

Mn(2+) contacts are provided by K260 and D265. K272 is an active-site residue. The Mn(2+) site is built by D283, D342, and E344. R346 is a catalytic residue.

It belongs to the peptidase M17 family. Mn(2+) is required as a cofactor.

The protein resides in the cytoplasm. The catalysed reaction is Release of an N-terminal amino acid, Xaa-|-Yaa-, in which Xaa is preferably Leu, but may be other amino acids including Pro although not Arg or Lys, and Yaa may be Pro. Amino acid amides and methyl esters are also readily hydrolyzed, but rates on arylamides are exceedingly low.. It catalyses the reaction Release of an N-terminal amino acid, preferentially leucine, but not glutamic or aspartic acids.. Functionally, presumably involved in the processing and regular turnover of intracellular proteins. Catalyzes the removal of unsubstituted N-terminal amino acids from various peptides. This Bacillus thuringiensis (strain Al Hakam) protein is Probable cytosol aminopeptidase.